The sequence spans 458 residues: MEMDTIAAISTALGEGAIGIVRLSGDQAIAIGDKLFKGTKRLEDTPSHTIVYGHLMDDASEEAIEEAMVTVMRAPRTYTREDIVEINCHGGLVSVNRVLQAVLAKGARLAEPGEFTKRAFLNGRIDLSQAEGVIDLIRSKTDRAMNVALRQVEGRLSKKIGKLRQALLETIASIEVNIDYPEYDAETMTAKLINEKMTIVLAEIEALLATAKQGKVLREGLATAIIGRPNVGKSSLMNSLVHEAKAIVTDIPGTTRDTLEEYVNVRGVPLRLIDTAGIRETEDIVERIGVERSRQALKEADLILLVLNYAEKLSKEDEALFEAVKGLDVVVIVNKIDQTGRIDMERVRQLAGENPVVATSFLQEEGVDQLEEAISRLFFAGGVEGADLTYVSNARHIGLLNQAKAHAEEAIAASLTDVPVDLIQIDVTRTWELLGEIIGEDVQDSLIDQLFSQFCLGK.

(6S)-5-formyl-5,6,7,8-tetrahydrofolate is bound by residues arginine 22, glutamate 85, and arginine 124. In terms of domain architecture, TrmE-type G spans 220-379 (GLATAIIGRP…LEEAISRLFF (160 aa)). Residue asparagine 230 participates in K(+) binding. GTP contacts are provided by residues 230-235 (NVGKSS), 249-255 (TDIPGTT), and 274-277 (DTAG). Residue serine 234 coordinates Mg(2+). K(+) is bound by residues threonine 249, isoleucine 251, and threonine 254. Threonine 255 is a Mg(2+) binding site. Lysine 458 is a (6S)-5-formyl-5,6,7,8-tetrahydrofolate binding site.

The protein belongs to the TRAFAC class TrmE-Era-EngA-EngB-Septin-like GTPase superfamily. TrmE GTPase family. Homodimer. Heterotetramer of two MnmE and two MnmG subunits. K(+) is required as a cofactor.

It is found in the cytoplasm. Exhibits a very high intrinsic GTPase hydrolysis rate. Involved in the addition of a carboxymethylaminomethyl (cmnm) group at the wobble position (U34) of certain tRNAs, forming tRNA-cmnm(5)s(2)U34. This is tRNA modification GTPase MnmE from Shouchella clausii (strain KSM-K16) (Alkalihalobacillus clausii).